We begin with the raw amino-acid sequence, 346 residues long: Integrin beta-1-binding protein 2 (346 aa).

The Zn(2+) site is built by C5, C10, C24, and H27. The CHORD 1 domain maps to C5–H64. The SH3-binding signature appears at P28–P31. Zn(2+)-binding residues include C42, C43, C59, and H64. Residues P70–P78 carry the SH3-binding motif. Residues P70–L113 form a disordered region. The span at A79 to P94 shows a compositional bias: polar residues. Over residues E98–L109 the composition is skewed to basic and acidic residues. Residues C150 and C155 each coordinate Zn(2+). One can recognise a CHORD 2 domain in the interval C150 to H209. The SH2-binding motif lies at Y159 to S162. C169 and H172 together coordinate Zn(2+). Residues P173 to P176 carry the SH3-binding motif. The Zn(2+) site is built by C187, C188, C204, and H209. In terms of domain architecture, CS spans L216 to E305. Residues Y235–I238 carry the SH2-binding motif. The segment at A311–E346 is disordered. The span at E321–E346 shows a compositional bias: acidic residues.

As to quaternary structure, interacts with beta-1 integrin subunit. This interaction is regulated by divalent cations, and it occurs only in absence of calcium.

Functionally, may play a role during maturation and/or organization of muscles cells. This chain is Integrin beta-1-binding protein 2 (ITGB1BP2), found in Sus scrofa (Pig).